The sequence spans 257 residues: Gamma-secretase subunit APH-1B (257 aa).

The next 7 helical transmembrane spans lie at 5 to 25 (VFFG…VFTI), 32 to 52 (IIFL…SSLV), 71 to 91 (LLIF…FAYY), 115 to 135 (LLAY…SFVN), 158 to 178 (YSAF…IVFF), 186 to 206 (WGIL…TFIS), and 213 to 233 (LASA…AAGG).

This sequence belongs to the APH-1 family. As to quaternary structure, probable component of the gamma-secretase complex, a complex composed of a presenilin homodimer (PSEN1 or PSEN2), nicastrin (NCSTN), APH1 (APH1A or APH1B) and PEN2. Such minimal complex is sufficient for secretase activity, although other components may exist. Interacts with PSEN1 and PSEN2. As to expression, weakly or not expressed in leukocytes, lung, placenta, small intestine, liver, kidney, spleen thymus, colon, skeletal muscle, heart and brain.

Its subcellular location is the membrane. In terms of biological role, probable subunit of the gamma-secretase complex, an endoprotease complex that catalyzes the intramembrane cleavage of integral proteins such as Notch receptors and APP (amyloid-beta precursor protein). It probably represents a stabilizing cofactor for the presenilin homodimer that promotes the formation of a stable complex. Probably present in a minority of gamma-secretase complexes compared to APH1A. This is Gamma-secretase subunit APH-1B (APH1B) from Homo sapiens (Human).